Reading from the N-terminus, the 264-residue chain is S-adenosylmethionine decarboxylase proenzyme (264 aa).

S112 acts as the Schiff-base intermediate with substrate; via pyruvic acid in catalysis. A Pyruvic acid (Ser); by autocatalysis modification is found at S112. Catalysis depends on H117, which acts as the Proton acceptor; for processing activity. Residue C140 is the Proton donor; for catalytic activity of the active site.

Belongs to the prokaryotic AdoMetDC family. Type 2 subfamily. As to quaternary structure, heterooctamer of four alpha and four beta chains arranged as a tetramer of alpha/beta heterodimers. The cofactor is pyruvate. Post-translationally, is synthesized initially as an inactive proenzyme. Formation of the active enzyme involves a self-maturation process in which the active site pyruvoyl group is generated from an internal serine residue via an autocatalytic post-translational modification. Two non-identical subunits are generated from the proenzyme in this reaction, and the pyruvate is formed at the N-terminus of the alpha chain, which is derived from the carboxyl end of the proenzyme. The post-translation cleavage follows an unusual pathway, termed non-hydrolytic serinolysis, in which the side chain hydroxyl group of the serine supplies its oxygen atom to form the C-terminus of the beta chain, while the remainder of the serine residue undergoes an oxidative deamination to produce ammonia and the pyruvoyl group blocking the N-terminus of the alpha chain.

The catalysed reaction is S-adenosyl-L-methionine + H(+) = S-adenosyl 3-(methylsulfanyl)propylamine + CO2. The protein operates within amine and polyamine biosynthesis; S-adenosylmethioninamine biosynthesis; S-adenosylmethioninamine from S-adenosyl-L-methionine: step 1/1. Its function is as follows. Catalyzes the decarboxylation of S-adenosylmethionine to S-adenosylmethioninamine (dcAdoMet), the propylamine donor required for the synthesis of the polyamines spermine and spermidine from the diamine putrescine. This is S-adenosylmethionine decarboxylase proenzyme from Klebsiella pneumoniae (strain 342).